The following is an 84-amino-acid chain: Envelope glycoprotein N (84 aa).

The first 26 residues, M1 to A26, serve as a signal peptide directing secretion. The Virion surface portion of the chain corresponds to T27–S47. A helical transmembrane segment spans residues F48–L68. At K69–Y84 the chain is on the intravirion side.

Belongs to the herpesviridae glycoprotein N family. As to quaternary structure, interacts (via N-terminus) with gM (via N-terminus). The gM-gN heterodimer forms the gCII complex.

The protein resides in the virion membrane. It localises to the host membrane. It is found in the host Golgi apparatus. Its subcellular location is the host trans-Golgi network. Its function is as follows. Envelope glycoprotein necessary for proper maturation of gM and modulation of its membrane fusion activity. Also plays a critical role in virion morphogenesis. The polypeptide is Envelope glycoprotein N (Homo sapiens (Human)).